A 149-amino-acid chain; its full sequence is uncharacterized protein (149 aa).

Disordered stretches follow at residues 24-74 and 129-149; these read TSQG…NDLE and AIQDDAGIPNPEMPKSAPRAP. The span at 28-42 shows a compositional bias: basic and acidic residues; that stretch reads EDVKPEPKPEVDEKV. Residues 102–131 are a coiled coil; that stretch reads SELESLKEKVSSATSMEELREIMEEFRAIQ.

This is an uncharacterized protein from Archaeoglobus fulgidus (strain ATCC 49558 / DSM 4304 / JCM 9628 / NBRC 100126 / VC-16).